Consider the following 366-residue polypeptide: Chorismate synthase (366 aa).

NADP(+) is bound by residues Arg48 and Arg54. Residues 125–127 (RSS), 238–239 (NA), Gly278, 293–297 (KPTSS), and Arg319 contribute to the FMN site.

Belongs to the chorismate synthase family. As to quaternary structure, homotetramer. Requires FMNH2 as cofactor.

The catalysed reaction is 5-O-(1-carboxyvinyl)-3-phosphoshikimate = chorismate + phosphate. The protein operates within metabolic intermediate biosynthesis; chorismate biosynthesis; chorismate from D-erythrose 4-phosphate and phosphoenolpyruvate: step 7/7. Functionally, catalyzes the anti-1,4-elimination of the C-3 phosphate and the C-6 proR hydrogen from 5-enolpyruvylshikimate-3-phosphate (EPSP) to yield chorismate, which is the branch point compound that serves as the starting substrate for the three terminal pathways of aromatic amino acid biosynthesis. This reaction introduces a second double bond into the aromatic ring system. This Neisseria meningitidis serogroup C / serotype 2a (strain ATCC 700532 / DSM 15464 / FAM18) protein is Chorismate synthase.